The chain runs to 248 residues: Mannose-binding protein C (248 aa).

The signal sequence occupies residues 1-20; that stretch reads MSLFPSLTLLLLSVVATSYS. The region spanning 42–99 is the Collagen-like domain; the sequence is GINGFPGKDGRDGTKGEKGEPGQGLRGLQGPPGKLGPPGNPGSSGSPGPKGQKGDPGE. Positions 43–111 are disordered; it reads INGFPGKDGR…DCESSLAASE (69 aa). 4-hydroxyproline is present on P47. Positions 49-61 are enriched in basic and acidic residues; that stretch reads KDGRDGTKGEKGE. 4 positions are modified to 4-hydroxyproline: P73, P79, P82, and P88. A compositionally biased stretch (low complexity) spans 82-91; sequence PGSSGSPGPK. Residues 112–130 adopt a coiled-coil conformation; sequence RKALQTEMARIKKWLTFSL. One can recognise a C-type lectin domain in the interval 134–245; the sequence is VGNKFFLTNG…CSSSHLALCE (112 aa). 2 disulfides stabilise this stretch: C155–C244 and C222–C236.

As to quaternary structure, oligomeric complex of 3 or more homotrimers. Interacts with MASP1 and MASP2. Interacts with MEP1A and MEP1B and may inhibit their catalytic activity. Post-translationally, hydroxylation on proline residues within the sequence motif, GXPG, is most likely to be 4-hydroxy as this fits the requirement for 4-hydroxylation in vertebrates.

It localises to the secreted. Calcium-dependent lectin involved in innate immune defense. Binds mannose, fucose and N-acetylglucosamine on different microorganisms and activates the lectin complement pathway. Binds to late apoptotic cells, as well as to apoptotic blebs and to necrotic cells, but not to early apoptotic cells, facilitating their uptake by macrophages. This chain is Mannose-binding protein C (MBL2), found in Macaca fascicularis (Crab-eating macaque).